A 420-amino-acid chain; its full sequence is Gamma-glutamyl phosphate reductase (420 aa).

Belongs to the gamma-glutamyl phosphate reductase family.

The protein resides in the cytoplasm. It carries out the reaction L-glutamate 5-semialdehyde + phosphate + NADP(+) = L-glutamyl 5-phosphate + NADPH + H(+). The protein operates within amino-acid biosynthesis; L-proline biosynthesis; L-glutamate 5-semialdehyde from L-glutamate: step 2/2. Functionally, catalyzes the NADPH-dependent reduction of L-glutamate 5-phosphate into L-glutamate 5-semialdehyde and phosphate. The product spontaneously undergoes cyclization to form 1-pyrroline-5-carboxylate. The protein is Gamma-glutamyl phosphate reductase of Laribacter hongkongensis (strain HLHK9).